We begin with the raw amino-acid sequence, 282 residues long: Nucleotide-binding protein Fnod_1159 (282 aa).

ATP is bound at residue 9–16 (GHSGAGKS). 57–60 (DIRS) serves as a coordination point for GTP.

The protein belongs to the RapZ-like family.

Functionally, displays ATPase and GTPase activities. This chain is Nucleotide-binding protein Fnod_1159, found in Fervidobacterium nodosum (strain ATCC 35602 / DSM 5306 / Rt17-B1).